Reading from the N-terminus, the 142-residue chain is uncharacterized protein (142 aa).

The protein localises to the mitochondrion. This is an uncharacterized protein from Mus musculus (Mouse).